An 876-amino-acid chain; its full sequence is Valine--tRNA ligase (876 aa).

Residues 44-54 carry the 'HIGH' region motif; that stretch reads PNVTGKLHLGH. Residues 520 to 524 carry the 'KMSKS' region motif; sequence KMSKS. Lysine 523 contacts ATP. The stretch at 805–876 forms a coiled coil; it reads LEGLIDMDKE…VKARIEQLKA (72 aa).

This sequence belongs to the class-I aminoacyl-tRNA synthetase family. ValS type 1 subfamily. As to quaternary structure, monomer.

Its subcellular location is the cytoplasm. The enzyme catalyses tRNA(Val) + L-valine + ATP = L-valyl-tRNA(Val) + AMP + diphosphate. In terms of biological role, catalyzes the attachment of valine to tRNA(Val). As ValRS can inadvertently accommodate and process structurally similar amino acids such as threonine, to avoid such errors, it has a 'posttransfer' editing activity that hydrolyzes mischarged Thr-tRNA(Val) in a tRNA-dependent manner. The polypeptide is Valine--tRNA ligase (Staphylococcus aureus (strain JH1)).